A 396-amino-acid polypeptide reads, in one-letter code: Protein NDRG1-B (396 aa).

A disordered region spans residues 326–396 (RSRTGSAASS…NTPKSMEVSC (71 aa)). The segment covering 327–340 (SRTGSAASSSSQDG) has biased composition (low complexity). Repeat copies occupy residues 340–349 (GNRSRSHTNE), 350–359 (GSRSRSQTGD), 360–369 (GNRSRAHTGD), and 370–379 (GNRSRSHTDT). The segment at 340–379 (GNRSRSHTNEGSRSRSQTGDGNRSRAHTGDGNRSRSHTDT) is 4 X 10 AA tandem repeats of G-[NS]-R-S-R-[AS]-[HQ]-T-[DGN]-[DET]. Basic and acidic residues predominate over residues 366–377 (HTGDGNRSRSHT). The span at 378–390 (DTNNVNSDHNTPK) shows a compositional bias: polar residues.

This sequence belongs to the NDRG family.

May be involved in pronephros development, after specification of the pronephros. The chain is Protein NDRG1-B (ndrg1-b) from Xenopus laevis (African clawed frog).